Consider the following 169-residue polypeptide: Succinate dehydrogenase cytochrome b560 subunit, mitochondrial (169 aa).

The N-terminal 29 residues, 1–29 (MAAFLLRHVSRHCLRAHLNAQLCIRNAAP), are a transit peptide targeting the mitochondrion. The Mitochondrial matrix portion of the chain corresponds to 30 to 62 (LGTTAKEEMERFWKKNTSSNRPLSPHLTIYKWS). Residues 63-92 (LPMALSVCHRGSGIALSGGVSLFGLSALLL) form a helical membrane-spanning segment. Topologically, residues 93–112 (PGNFESYLMFVKSLCLGPTL) are mitochondrial intermembrane. Residues 113-137 (IYSAKFVLVFPLMYHSLNGIRHLLW) traverse the membrane as a helical segment. Histidine 127 contacts heme b. Topologically, residues 138–144 (DLGKGLA) are mitochondrial matrix. Residues 145–166 (IPQVWLSGVAVVVLAVLSSGGL) form a helical membrane-spanning segment. Topologically, residues 167–169 (AAL) are mitochondrial intermembrane.

This sequence belongs to the cytochrome b560 family. In terms of assembly, component of complex II composed of four subunits: the flavoprotein (FP) SDHA, iron-sulfur protein (IP) SDHB, and a cytochrome b560 composed of SDHC and SDHD. Heme b is required as a cofactor.

The protein localises to the mitochondrion inner membrane. It participates in carbohydrate metabolism; tricarboxylic acid cycle. Its function is as follows. Membrane-anchoring subunit of succinate dehydrogenase (SDH) that is involved in complex II of the mitochondrial electron transport chain and is responsible for transferring electrons from succinate to ubiquinone (coenzyme Q). SDH also oxidizes malate to the non-canonical enol form of oxaloacetate, enol-oxaloacetate. Enol-oxaloacetate, which is a potent inhibitor of the succinate dehydrogenase activity, is further isomerized into keto-oxaloacetate. This Mus musculus (Mouse) protein is Succinate dehydrogenase cytochrome b560 subunit, mitochondrial (Sdhc).